We begin with the raw amino-acid sequence, 1233 residues long: Hemocyanin A-type, units Ode to Odg (1233 aa).

Residues 1–4 (EGNE) form an ODD region. The tract at residues 5–422 (YLVRKNVERL…KQDADIDIPL (418 aa)) is ODE. His45 is a binding site for Cu cation. Cys51 and Cys62 form a disulfide bridge. The 2'-(S-cysteinyl)-histidine (Cys-His) cross-link spans 63–65 (CLH). His65, His74, His186, His190, and His217 together coordinate Cu cation. 2 cysteine pairs are disulfide-bonded: Cys176–Cys243 and Cys334–Cys340. A glycan (N-linked (GlcNAc...) asparagine) is linked at Asn392. The ODF stretch occupies residues 423–839 (NHIRRNVESL…KEIEKEAVRG (417 aa)). Position 463 (His463) interacts with Cu cation. The cysteines at positions 468 and 478 are disulfide-linked. Residues 479 to 481 (CLH) constitute a cross-link (2'-(S-cysteinyl)-histidine (Cys-His)). Residues His481 and His490 each contribute to the Cu cation site. A glycan (N-linked (GlcNAc...) asparagine) is linked at Asn538. Intrachain disulfides connect Cys589–Cys656 and Cys743–Cys748. The Cu cation site is built by His599, His603, and His630. Positions 840-1233 (TIIRKNVNSL…VFLAPAKTTH (394 aa)) are ODG. His880 serves as a coordination point for Cu cation. The cysteines at positions 886 and 896 are disulfide-linked. N-linked (GlcNAc...) asparagine glycosylation occurs at Asn890. The 2'-(S-cysteinyl)-histidine (Cys-His) cross-link spans 897–899 (CQH). Positions 899, 908, 1008, 1012, and 1039 each coordinate Cu cation. Cystine bridges form between Cys998–Cys1065 and Cys1152–Cys1158.

It belongs to the tyrosinase family. Hemocyanin subfamily. In terms of assembly, decamers of large identical subunits (350 kDa), each containing 7 globular oxygen-binding domains: ODA, ODB, ODC, ODD, ODE, ODF, and ODG. The cofactor is Cu(2+).

Hemocyanins are copper-containing oxygen carriers occurring freely dissolved in the hemolymph of many mollusks and arthropods. The polypeptide is Hemocyanin A-type, units Ode to Odg (Enteroctopus dofleini (North Pacific giant octopus)).